Reading from the N-terminus, the 204-residue chain is Ancillary SecYEG translocon subunit (204 aa).

Topologically, residues Met1–Lys23 are cytoplasmic. The chain crosses the membrane as a helical span at residues Thr24–Trp42. Topologically, residues Gln43–Leu204 are periplasmic.

This sequence belongs to the YfgM family. Interacts with the SecYEG translocon. Forms a complex with PpiD.

The protein resides in the cell inner membrane. May mediate protein transfer from the SecYEG translocon to the periplasmic chaperone network via its periplasmic C-terminal region. This Haemophilus influenzae (strain ATCC 51907 / DSM 11121 / KW20 / Rd) protein is Ancillary SecYEG translocon subunit.